A 149-amino-acid chain; its full sequence is Transcriptional repressor NrdR (149 aa).

The segment at 3–34 (CPFCFAVDTKVIDSRLVGEGSSVRRRRQCLVC) is a zinc-finger region. The region spanning 49-139 (PRVVKSNDVR…VYRSFEDIRE (91 aa)) is the ATP-cone domain.

This sequence belongs to the NrdR family. It depends on Zn(2+) as a cofactor.

Functionally, negatively regulates transcription of bacterial ribonucleotide reductase nrd genes and operons by binding to NrdR-boxes. The chain is Transcriptional repressor NrdR from Cronobacter sakazakii (strain ATCC BAA-894) (Enterobacter sakazakii).